Consider the following 504-residue polypeptide: L-amino-acid oxidase (504 aa).

The first 18 residues, 1–18 (MNIFFMFSLLFLATLGSC), serve as a signal peptide directing secretion. Cys-28 and Cys-191 are disulfide-bonded. FAD-binding positions include 61–62 (MS), 81–82 (EA), Arg-89, and 105–108 (GPMR). Arg-108 provides a ligand contact to substrate. Residue Asn-190 is glycosylated (N-linked (GlcNAc...) asparagine). His-241 contributes to the substrate binding site. FAD is bound at residue Val-279. An intrachain disulfide couples Cys-349 to Cys-430. Asn-379 carries an N-linked (GlcNAc...) asparagine glycan. Residue Tyr-390 participates in substrate binding. FAD is bound by residues Glu-475 and 482 to 487 (GWIDST). A substrate-binding site is contributed by 482–483 (GW).

This sequence belongs to the flavin monoamine oxidase family. FIG1 subfamily. As to quaternary structure, homodimer; non-covalently linked. The cofactor is FAD. In terms of tissue distribution, expressed by the venom gland.

It is found in the secreted. It carries out the reaction an L-alpha-amino acid + O2 + H2O = a 2-oxocarboxylate + H2O2 + NH4(+). In terms of biological role, catalyzes an oxidative deamination of predominantly hydrophobic and aromatic L-amino acids, thus producing hydrogen peroxide that may contribute to the diverse toxic effects of this enzyme. Exhibits diverse biological activities, such as hemorrhage, hemolysis, edema, apoptosis of vascular endothelial cells or tumor cell lines, antibacterial and antiparasitic activities, as well as regulation of platelet aggregation. Its effect on platelets is controversial, since it either induces aggregation or inhibits agonist-induced aggregation. These different effects are probably due to different experimental conditions. This chain is L-amino-acid oxidase, found in Echis ocellatus (Ocellated saw-scaled viper).